Consider the following 188-residue polypeptide: MYMQVESRTGTLLHLKRNPSIRSWSLLVGILSVGLAAAYYSTDTWLWKLFYVAGCAFVALQNLEDWEEAVFDKKSGKAILTTYSIYKKLLTLCKGGQDQVVVLLKEIRDVNVAEERVRYFGKGYVIVLRFVTGISHPLTQSAVLGARSDVEAVAKELTKFLELDLVRTRSQAVEESSDSESDGALDKQ.

A helical membrane pass occupies residues 20 to 42 (SIRSWSLLVGILSVGLAAAYYST).

It belongs to the CYBC1 family.

It is found in the endoplasmic reticulum membrane. Functions as a chaperone necessary for a stable expression of the CYBA and CYBB subunits of the cytochrome b-245 heterodimer. This chain is Cytochrome b-245 chaperone 1 homolog (cybc1), found in Xenopus laevis (African clawed frog).